The primary structure comprises 89 residues: Small ribosomal subunit protein uS15 (89 aa).

The protein belongs to the universal ribosomal protein uS15 family. In terms of assembly, part of the 30S ribosomal subunit. Forms a bridge to the 50S subunit in the 70S ribosome, contacting the 23S rRNA.

In terms of biological role, one of the primary rRNA binding proteins, it binds directly to 16S rRNA where it helps nucleate assembly of the platform of the 30S subunit by binding and bridging several RNA helices of the 16S rRNA. Functionally, forms an intersubunit bridge (bridge B4) with the 23S rRNA of the 50S subunit in the ribosome. This is Small ribosomal subunit protein uS15 from Neisseria gonorrhoeae (strain ATCC 700825 / FA 1090).